The primary structure comprises 113 residues: Iron-sulfur cluster insertion protein ErpA (113 aa).

Cys-41, Cys-105, and Cys-107 together coordinate iron-sulfur cluster.

The protein belongs to the HesB/IscA family. In terms of assembly, homodimer. It depends on iron-sulfur cluster as a cofactor.

Required for insertion of 4Fe-4S clusters for at least IspG. In Glaesserella parasuis serovar 5 (strain SH0165) (Haemophilus parasuis), this protein is Iron-sulfur cluster insertion protein ErpA.